Reading from the N-terminus, the 760-residue chain is 5-methyltetrahydropteroyltriglutamate--homocysteine methyltransferase (760 aa).

5-methyltetrahydropteroyltri-L-glutamate-binding positions include 17-20 (RELK) and lysine 118. Residues 436–438 (IGS) and glutamate 489 contribute to the L-homocysteine site. Residues 436 to 438 (IGS) and glutamate 489 contribute to the L-methionine site. 5-methyltetrahydropteroyltri-L-glutamate contacts are provided by residues 520 to 521 (RC) and tryptophan 566. An L-homocysteine-binding site is contributed by aspartate 604. Aspartate 604 provides a ligand contact to L-methionine. Residue glutamate 610 coordinates 5-methyltetrahydropteroyltri-L-glutamate. Zn(2+) is bound by residues histidine 646, cysteine 648, and glutamate 670. Catalysis depends on histidine 699, which acts as the Proton donor. Cysteine 731 serves as a coordination point for Zn(2+).

The protein belongs to the vitamin-B12 independent methionine synthase family. The cofactor is Zn(2+).

The enzyme catalyses 5-methyltetrahydropteroyltri-L-glutamate + L-homocysteine = tetrahydropteroyltri-L-glutamate + L-methionine. Its pathway is amino-acid biosynthesis; L-methionine biosynthesis via de novo pathway; L-methionine from L-homocysteine (MetE route): step 1/1. Catalyzes the transfer of a methyl group from 5-methyltetrahydrofolate to homocysteine resulting in methionine formation. The sequence is that of 5-methyltetrahydropteroyltriglutamate--homocysteine methyltransferase from Vibrio parahaemolyticus serotype O3:K6 (strain RIMD 2210633).